A 481-amino-acid chain; its full sequence is uncharacterized protein (481 aa).

Belongs to the metallophosphoesterase superfamily.

This is an uncharacterized protein from Bacillus subtilis (strain 168).